The sequence spans 164 residues: Endoribonuclease YbeY (164 aa).

Residues His-120, His-124, and His-130 each contribute to the Zn(2+) site.

Belongs to the endoribonuclease YbeY family. It depends on Zn(2+) as a cofactor.

The protein localises to the cytoplasm. Single strand-specific metallo-endoribonuclease involved in late-stage 70S ribosome quality control and in maturation of the 3' terminus of the 16S rRNA. This chain is Endoribonuclease YbeY, found in Acidothermus cellulolyticus (strain ATCC 43068 / DSM 8971 / 11B).